A 351-amino-acid polypeptide reads, in one-letter code: Methylthioribose-1-phosphate isomerase (351 aa).

Asp-244 serves as the catalytic Proton donor.

The protein belongs to the eIF-2B alpha/beta/delta subunits family. MtnA subfamily.

It localises to the cytoplasm. Its subcellular location is the nucleus. The enzyme catalyses 5-(methylsulfanyl)-alpha-D-ribose 1-phosphate = 5-(methylsulfanyl)-D-ribulose 1-phosphate. Its pathway is amino-acid biosynthesis; L-methionine biosynthesis via salvage pathway; L-methionine from S-methyl-5-thio-alpha-D-ribose 1-phosphate: step 1/6. Catalyzes the interconversion of methylthioribose-1-phosphate (MTR-1-P) into methylthioribulose-1-phosphate (MTRu-1-P). This chain is Methylthioribose-1-phosphate isomerase, found in Anopheles gambiae (African malaria mosquito).